A 468-amino-acid polypeptide reads, in one-letter code: Protein phosphatase ppm-1.A (468 aa).

The segment at 1-23 (MTISRADLQIASSAEPKTHGNLN) is disordered. A PPM-type phosphatase domain is found at 106–381 (RYGMSSMQGW…DNMTMVVVCF (276 aa)). The Mn(2+) site is built by Asp-145, Gly-146, Asp-329, and Asp-372.

It belongs to the PP2C family. Requires Mg(2+) as cofactor. Mn(2+) serves as cofactor. In terms of tissue distribution, expressed in neurons of the nerve ring and motor neurons of the ventral nerve cord.

Its subcellular location is the synapse. The catalysed reaction is O-phospho-L-seryl-[protein] + H2O = L-seryl-[protein] + phosphate. It carries out the reaction O-phospho-L-threonyl-[protein] + H2O = L-threonyl-[protein] + phosphate. Probable phosphatase which regulates axon termination in ALM and PLM neurons, and synaptic branch extension and/or stabilization in PLM neurons. Plays a role in synapse formation in GABAergic DD motor neurons probably by dephosphorylating pmk-3 thereby negatively regulating a MAP kinase pathway that includes dlk-1, mkk-4 and pmk-3. The sequence is that of Protein phosphatase ppm-1.A from Caenorhabditis elegans.